The chain runs to 98 residues: NADH-ubiquinone oxidoreductase chain 4L (98 aa).

3 helical membrane passes run 2 to 22 (MMAV…TLMF), 26 to 46 (LMST…ITTI), and 59 to 79 (IPIV…ALLV).

The protein belongs to the complex I subunit 4L family. In terms of assembly, core subunit of respiratory chain NADH dehydrogenase (Complex I) which is composed of 45 different subunits.

It is found in the mitochondrion inner membrane. The enzyme catalyses a ubiquinone + NADH + 5 H(+)(in) = a ubiquinol + NAD(+) + 4 H(+)(out). Its function is as follows. Core subunit of the mitochondrial membrane respiratory chain NADH dehydrogenase (Complex I) which catalyzes electron transfer from NADH through the respiratory chain, using ubiquinone as an electron acceptor. Part of the enzyme membrane arm which is embedded in the lipid bilayer and involved in proton translocation. The polypeptide is NADH-ubiquinone oxidoreductase chain 4L (MT-ND4L) (Phodopus sungorus (Striped hairy-footed hamster)).